A 65-amino-acid chain; its full sequence is Light-harvesting protein B800/830/1020 beta-2 chain (65 aa).

The Cytoplasmic segment spans residues 1 to 17 (TDIRTGLTDEECQEIHE). Positions 16 and 34 each coordinate a bacteriochlorophyll. Residues 18-40 (MNMLGMHAYWSIGLIANALAYAW) form a helical membrane-spanning segment. Topologically, residues 41 to 65 (RPFHQGRAGNRLEDHAPDYVRSALT) are periplasmic.

It belongs to the antenna complex beta subunit family. In terms of assembly, the core complex is formed by different alpha and beta chains, binding bacteriochlorophyll molecules, and arranged most probably in tetrameric structures disposed around the reaction center. The non-pigmented gamma chains may constitute additional components.

It is found in the cell inner membrane. Functionally, antenna complexes are light-harvesting systems, which transfer the excitation energy to the reaction centers. The chain is Light-harvesting protein B800/830/1020 beta-2 chain from Halorhodospira halochloris (Ectothiorhodospira halochloris).